A 216-amino-acid chain; its full sequence is Imidazole glycerol phosphate synthase subunit HisH (216 aa).

The region spanning 5-213 is the Glutamine amidotransferase type-1 domain; the sequence is RLAVIDYDAG…VEFVARRLPA (209 aa). C83 serves as the catalytic Nucleophile. Residues H188 and E190 contribute to the active site.

In terms of assembly, heterodimer of HisH and HisF.

Its subcellular location is the cytoplasm. It carries out the reaction 5-[(5-phospho-1-deoxy-D-ribulos-1-ylimino)methylamino]-1-(5-phospho-beta-D-ribosyl)imidazole-4-carboxamide + L-glutamine = D-erythro-1-(imidazol-4-yl)glycerol 3-phosphate + 5-amino-1-(5-phospho-beta-D-ribosyl)imidazole-4-carboxamide + L-glutamate + H(+). It catalyses the reaction L-glutamine + H2O = L-glutamate + NH4(+). The protein operates within amino-acid biosynthesis; L-histidine biosynthesis; L-histidine from 5-phospho-alpha-D-ribose 1-diphosphate: step 5/9. Its function is as follows. IGPS catalyzes the conversion of PRFAR and glutamine to IGP, AICAR and glutamate. The HisH subunit catalyzes the hydrolysis of glutamine to glutamate and ammonia as part of the synthesis of IGP and AICAR. The resulting ammonia molecule is channeled to the active site of HisF. The polypeptide is Imidazole glycerol phosphate synthase subunit HisH (Synechococcus sp. (strain JA-3-3Ab) (Cyanobacteria bacterium Yellowstone A-Prime)).